We begin with the raw amino-acid sequence, 215 residues long: MYFHALIPFKPVNPKTRLSCILNQEEREAFARAMLEDVIAAVQKSGCSATLLCTHSFKHENALVAVRTEPLNDAINWALGQFHCPALIIMGDIPLVTAGDIQRLIRTEKDMSIVPGRGGGTNIIFLKKPRCFRADYYGASFLDHMRIAEECGFSVEVIDSFRMSTDIDEKEDLVEILIHGKGRRSREYLENSGFSIALDEKGRVGVQRDPHEEAL.

Belongs to the CofC family. As to quaternary structure, homodimer.

The catalysed reaction is (2S)-2-phospholactate + GTP + H(+) = (2S)-lactyl-2-diphospho-5'-guanosine + diphosphate. Its pathway is cofactor biosynthesis; coenzyme F420 biosynthesis. Functionally, guanylyltransferase that catalyzes the activation of (2S)-2-phospholactate (2-PL) as (2S)-lactyl-2-diphospho-5'-guanosine, via the condensation of 2-PL with GTP. It is involved in the biosynthesis of coenzyme F420, a hydride carrier cofactor. The sequence is that of 2-phospho-L-lactate guanylyltransferase from Methanoculleus marisnigri (strain ATCC 35101 / DSM 1498 / JR1).